The sequence spans 56 residues: Large ribosomal subunit protein bL32 (56 aa).

Positions 1 to 26 (MAVQQNKPTRSKRGMRRSHDSLTTAA) are disordered.

This sequence belongs to the bacterial ribosomal protein bL32 family.

The chain is Large ribosomal subunit protein bL32 from Erwinia tasmaniensis (strain DSM 17950 / CFBP 7177 / CIP 109463 / NCPPB 4357 / Et1/99).